We begin with the raw amino-acid sequence, 83 residues long: UPF0297 protein CLK_1948 (83 aa).

The protein belongs to the UPF0297 family.

This is UPF0297 protein CLK_1948 from Clostridium botulinum (strain Loch Maree / Type A3).